The following is a 292-amino-acid chain: Elongation factor Ts (292 aa).

Residues 79–82 (TDFV) form an involved in Mg(2+) ion dislocation from EF-Tu region.

Belongs to the EF-Ts family.

It is found in the cytoplasm. Its function is as follows. Associates with the EF-Tu.GDP complex and induces the exchange of GDP to GTP. It remains bound to the aminoacyl-tRNA.EF-Tu.GTP complex up to the GTP hydrolysis stage on the ribosome. The polypeptide is Elongation factor Ts (Mycoplasmoides gallisepticum (strain R(low / passage 15 / clone 2)) (Mycoplasma gallisepticum)).